The sequence spans 531 residues: Na(+)/H(+) antiporter NhaB (531 aa).

Transmembrane regions (helical) follow at residues 13–33 (FLGKAPDWYKIAIISFLIINP), 34–54 (LVFFFVDPFAAGWLLVVEFIF), 90–110 (LVANIEVLLLLVFMVAGIYFM), 121–141 (ILIGIKSKTALSVAFCFTAAF), 145–165 (FLDALTVIAVVISVAVGFYAI), 206–226 (LLMHAGVGTALGGVMTMVGEP), 242–262 (FIIRMLPVTAPVFICGLLTCV), 308–328 (VIAVWLIVALAMHLAAVGLIG), 352–372 (EEALPFTALLAVFFAIVAVII), 394–414 (LALFYVANGILSMVSDNVFVG), 456–476 (GQAAFLFLLTSALAPLIQLSY), and 482–502 (MALPYTIVLALVGLFGISFLL).

It belongs to the NhaB Na(+)/H(+) (TC 2.A.34) antiporter family.

Its subcellular location is the cell inner membrane. It carries out the reaction 2 Na(+)(in) + 3 H(+)(out) = 2 Na(+)(out) + 3 H(+)(in). Na(+)/H(+) antiporter that extrudes sodium in exchange for external protons. This Aliivibrio salmonicida (strain LFI1238) (Vibrio salmonicida (strain LFI1238)) protein is Na(+)/H(+) antiporter NhaB.